Consider the following 628-residue polypeptide: Propionate--CoA ligase (628 aa).

This sequence belongs to the ATP-dependent AMP-binding enzyme family.

It catalyses the reaction propanoate + ATP + CoA = propanoyl-CoA + AMP + diphosphate. It participates in organic acid metabolism; propanoate degradation. Catalyzes the synthesis of propionyl-CoA from propionate and CoA. Also converts acetate to acetyl-CoA but with a lower specific activity. In Escherichia coli (strain K12), this protein is Propionate--CoA ligase (prpE).